The sequence spans 110 residues: ATP-dependent Clp protease adapter protein ClpS (110 aa).

Residues 1 to 10 (MSDDRRRGDE) are compositionally biased toward basic and acidic residues. A disordered region spans residues 1–27 (MSDDRRRGDEDGGAGTGVITKTKPKTK).

Belongs to the ClpS family. Binds to the N-terminal domain of the chaperone ClpA.

Involved in the modulation of the specificity of the ClpAP-mediated ATP-dependent protein degradation. The sequence is that of ATP-dependent Clp protease adapter protein ClpS from Parvibaculum lavamentivorans (strain DS-1 / DSM 13023 / NCIMB 13966).